We begin with the raw amino-acid sequence, 359 residues long: Phospho-N-acetylmuramoyl-pentapeptide-transferase (359 aa).

10 consecutive transmembrane segments (helical) span residues 23-43 (VAFF…IKWA), 68-88 (MGGI…GNLF), 92-112 (VLLG…DDYM), 126-146 (MKFF…LYIG), 165-185 (AFKI…VFLA), 198-218 (GLAT…VYVA), 235-255 (SGEL…FLWY), 262-282 (VFMG…MAIV), 287-307 (ILLL…ILQV), and 336-356 (KIIV…LLSL).

It belongs to the glycosyltransferase 4 family. MraY subfamily. Mg(2+) is required as a cofactor.

Its subcellular location is the cell inner membrane. It catalyses the reaction UDP-N-acetyl-alpha-D-muramoyl-L-alanyl-gamma-D-glutamyl-meso-2,6-diaminopimeloyl-D-alanyl-D-alanine + di-trans,octa-cis-undecaprenyl phosphate = di-trans,octa-cis-undecaprenyl diphospho-N-acetyl-alpha-D-muramoyl-L-alanyl-D-glutamyl-meso-2,6-diaminopimeloyl-D-alanyl-D-alanine + UMP. Its pathway is cell wall biogenesis; peptidoglycan biosynthesis. In terms of biological role, catalyzes the initial step of the lipid cycle reactions in the biosynthesis of the cell wall peptidoglycan: transfers peptidoglycan precursor phospho-MurNAc-pentapeptide from UDP-MurNAc-pentapeptide onto the lipid carrier undecaprenyl phosphate, yielding undecaprenyl-pyrophosphoryl-MurNAc-pentapeptide, known as lipid I. In Helicobacter hepaticus (strain ATCC 51449 / 3B1), this protein is Phospho-N-acetylmuramoyl-pentapeptide-transferase.